A 243-amino-acid polypeptide reads, in one-letter code: NH(3)-dependent NAD(+) synthetase (243 aa).

An ATP-binding site is contributed by 31-38; the sequence is GLSGGVDS. Position 37 (Asp-37) interacts with Mg(2+). Residue Arg-116 coordinates deamido-NAD(+). An ATP-binding site is contributed by Thr-136. Glu-141 contacts Mg(2+). Deamido-NAD(+) is bound by residues Lys-149 and Asp-156. Residues Lys-165 and Ser-187 each contribute to the ATP site. Residue 233-234 coordinates deamido-NAD(+); that stretch reads HK.

This sequence belongs to the NAD synthetase family. In terms of assembly, homodimer.

The enzyme catalyses deamido-NAD(+) + NH4(+) + ATP = AMP + diphosphate + NAD(+) + H(+). Its pathway is cofactor biosynthesis; NAD(+) biosynthesis; NAD(+) from deamido-NAD(+) (ammonia route): step 1/1. Functionally, catalyzes the ATP-dependent amidation of deamido-NAD to form NAD. Uses ammonia as a nitrogen source. The chain is NH(3)-dependent NAD(+) synthetase from Carboxydothermus hydrogenoformans (strain ATCC BAA-161 / DSM 6008 / Z-2901).